Consider the following 284-residue polypeptide: Diaminopimelate epimerase (284 aa).

Substrate is bound by residues Asn-14 and Asn-67. The active-site Proton donor is the Cys-76. Substrate is bound by residues 77 to 78 (GN), Asn-166, Asn-199, and 217 to 218 (ER). Catalysis depends on Cys-226, which acts as the Proton acceptor. 227–228 (GT) lines the substrate pocket.

Belongs to the diaminopimelate epimerase family. Homodimer.

The protein resides in the cytoplasm. It catalyses the reaction (2S,6S)-2,6-diaminopimelate = meso-2,6-diaminopimelate. The protein operates within amino-acid biosynthesis; L-lysine biosynthesis via DAP pathway; DL-2,6-diaminopimelate from LL-2,6-diaminopimelate: step 1/1. Its function is as follows. Catalyzes the stereoinversion of LL-2,6-diaminopimelate (L,L-DAP) to meso-diaminopimelate (meso-DAP), a precursor of L-lysine and an essential component of the bacterial peptidoglycan. This Bacillus subtilis (strain 168) protein is Diaminopimelate epimerase.